Consider the following 179-residue polypeptide: Large ribosomal subunit protein uL5 (179 aa).

It belongs to the universal ribosomal protein uL5 family. Part of the 50S ribosomal subunit; part of the 5S rRNA/L5/L18/L25 subcomplex. Contacts the 5S rRNA and the P site tRNA. Forms a bridge to the 30S subunit in the 70S ribosome.

Functionally, this is one of the proteins that bind and probably mediate the attachment of the 5S RNA into the large ribosomal subunit, where it forms part of the central protuberance. In the 70S ribosome it contacts protein S13 of the 30S subunit (bridge B1b), connecting the 2 subunits; this bridge is implicated in subunit movement. Contacts the P site tRNA; the 5S rRNA and some of its associated proteins might help stabilize positioning of ribosome-bound tRNAs. The polypeptide is Large ribosomal subunit protein uL5 (Buchnera aphidicola subsp. Acyrthosiphon pisum (strain APS) (Acyrthosiphon pisum symbiotic bacterium)).